Reading from the N-terminus, the 583-residue chain is Protein LONG AFTER FAR-RED 3 (583 aa).

Residues 7-27 form a helical membrane-spanning segment; the sequence is FPVMIGFVSAAVFLLISVAYL. N-linked (GlcNAc...) asparagine glycans are attached at residues Asn-55 and Asn-374.

This sequence belongs to the metallo-dependent hydrolases superfamily. In terms of tissue distribution, expressed at low level in seedlings, roots, leaves, stems, flowers, and siliques.

Its subcellular location is the membrane. It is found in the cytoplasm. The protein localises to the perinuclear region. Its function is as follows. Required for phyA-controlled responses to continuous far-red light (FRc) conditions, including the inhibition of hypocotyl elongation and the regulation of XTH15/XTR7 expression. The sequence is that of Protein LONG AFTER FAR-RED 3 from Arabidopsis thaliana (Mouse-ear cress).